Reading from the N-terminus, the 294-residue chain is 4-hydroxy-tetrahydrodipicolinate synthase (294 aa).

Residue Thr45 participates in pyruvate binding. Residue Tyr133 is the Proton donor/acceptor of the active site. Lys161 functions as the Schiff-base intermediate with substrate in the catalytic mechanism. Position 203 (Ile203) interacts with pyruvate.

It belongs to the DapA family. In terms of assembly, homotetramer; dimer of dimers.

It localises to the cytoplasm. The enzyme catalyses L-aspartate 4-semialdehyde + pyruvate = (2S,4S)-4-hydroxy-2,3,4,5-tetrahydrodipicolinate + H2O + H(+). The protein operates within amino-acid biosynthesis; L-lysine biosynthesis via DAP pathway; (S)-tetrahydrodipicolinate from L-aspartate: step 3/4. Functionally, catalyzes the condensation of (S)-aspartate-beta-semialdehyde [(S)-ASA] and pyruvate to 4-hydroxy-tetrahydrodipicolinate (HTPA). The chain is 4-hydroxy-tetrahydrodipicolinate synthase from Shewanella sp. (strain MR-4).